The primary structure comprises 2149 residues: Serine/threonine-protein kinase WNK2 (2149 aa).

Residues 1-10 (MDGDGGRRDA) show a composition bias toward basic and acidic residues. Disordered regions lie at residues 1 to 75 (MDGD…QRRV) and 87 to 183 (ERAR…EDDL). Omega-N-methylarginine is present on residues Arg19 and Arg30. Position 45 is a phosphoserine (Ser45). Residues 95–114 (APAPAAPAAPPGSPSVPSDP) are compositionally biased toward pro residues. Positions 161-172 (AKPEPGRARKDE) are enriched in basic and acidic residues. Acidic residues predominate over residues 173 to 182 (PEEEEDDEDD). The region spanning 195–453 (LKFDIELGRG…IKDLLSHAFF (259 aa)) is the Protein kinase domain. ATP-binding positions include Ser205, 275–278 (TELM), and Lys325. Asp342 serves as the catalytic Proton acceptor. Ser352 and Ser356 each carry phosphoserine; by autocatalysis. The residue at position 560 (Ser560) is a Phosphoserine. 3 disordered regions span residues 578-630 (HAQS…DSQS), 703-728 (SMSF…APPV), and 1067-1133 (QEEQ…ERAS). Positions 605 to 625 (ASVTSLASDSTFDSGQGSTVY) are enriched in polar residues. Residues 709 to 728 (VLPPPSTPVPTGPSQPAPPV) are compositionally biased toward pro residues. Residues 1081 to 1092 (QSSESFGGSDVT) are compositionally biased toward polar residues. Residue Ser1098 is modified to Phosphoserine. The span at 1115-1126 (ARKHHRRSTRAR) shows a compositional bias: basic residues. Phosphoserine is present on Ser1210. 2 disordered regions span residues 1211–1234 (EDTD…CGLA) and 1270–1502 (PATD…GFVD). 2 stretches are compositionally biased toward low complexity: residues 1275–1292 (SESS…EASQ) and 1317–1353 (SQAG…STVP). Over residues 1386–1400 (RSAQCTAQPLSTGQG) the composition is skewed to polar residues. The span at 1470–1485 (LPSPPLGPTAPPPPPS) shows a compositional bias: pro residues. Phosphoserine is present on residues Ser1507, Ser1566, and Ser1594. Disordered stretches follow at residues 1521–1727 (VPTS…PSSP) and 1739–1778 (ASSI…GGVA). Residues 1553–1567 (SDKTPSLTQQTQPSL) show a composition bias toward polar residues. Residues 1587-1597 (SSPMTAESSSS) show a composition bias toward low complexity. Residues 1610–1629 (ASDSSTAPSVPQDASGSSVP) are compositionally biased toward polar residues. Residues Ser1725, Ser1726, Ser1770, and Ser1797 each carry the phosphoserine modification. Residues 1916 to 1928 (ASSTGHLSDSSRG) are compositionally biased toward polar residues. The interval 1916 to 1947 (ASSTGHLSDSSRGPPTKDPRGTKAVQTQQPCS) is disordered. Ser1962 is modified (phosphoserine). Over residues 2018–2031 (SSLYDSPGSSTSSL) the composition is skewed to polar residues. Disordered stretches follow at residues 2018–2044 (SSLY…PTLH) and 2122–2149 (GPLS…EKPD). Low complexity predominate over residues 2122–2135 (GPLSTTATPGATPA).

The protein belongs to the protein kinase superfamily. Ser/Thr protein kinase family. WNK subfamily. Forms a complex with the phosphorylated form of STK39 in the brain. Mg(2+) is required as a cofactor. Post-translationally, autophosphorylated. Autophosphorylation at Ser-352 and Ser-356 promotes its activity. Brain and heart.

It localises to the cytoplasm. The protein resides in the cell membrane. It catalyses the reaction L-seryl-[protein] + ATP = O-phospho-L-seryl-[protein] + ADP + H(+). The enzyme catalyses L-threonyl-[protein] + ATP = O-phospho-L-threonyl-[protein] + ADP + H(+). Its activity is regulated as follows. Activation requires autophosphorylation of Ser-356 and, to a lower extent, Ser-352. Its function is as follows. Serine/threonine-protein kinase component of the WNK2-SPAK/OSR1 kinase cascade, which plays an important role in the regulation of electrolyte homeostasis, cell signaling, survival, and proliferation. The WNK2-SPAK/OSR1 kinase cascade is composed of WNK2, which mediates phosphorylation and activation of downstream kinases OXSR1/OSR1 and STK39/SPAK. Following activation, OXSR1/OSR1 and STK39/SPAK catalyze phosphorylation of ion cotransporters, regulating their activity. Acts as an activator and inhibitor of sodium-coupled chloride cotransporters and potassium-coupled chloride cotransporters respectively. Activates SLC12A2, SCNN1A, SCNN1B, SCNN1D and SGK1 and inhibits SLC12A5. Negatively regulates the EGF-induced activation of the ERK/MAPK-pathway and the downstream cell cycle progression. Affects MAPK3/MAPK1 activity by modulating the activity of MAP2K1 and this modulation depends on phosphorylation of MAP2K1 by PAK1. WNK2 acts by interfering with the activity of PAK1 by controlling the balance of the activity of upstream regulators of PAK1 activity, RHOA and RAC1, which display reciprocal activity. This is Serine/threonine-protein kinase WNK2 from Mus musculus (Mouse).